A 616-amino-acid chain; its full sequence is MPKYRSATTTHGRNMAGARALWRATGMTDADFGKPIIAVVNSFTQFVPGHVHLRDLGKLVAEQIEAAGGVAKEFNTIAVDDGIAMGHGGMLYSLPSRELIADSVEYMVNAHCADAMVCISNCDKITPGMLMASLRLNIPVIFVSGGPMEAGKTKLSDQIIKLDLVDAMIQGADPKVSDSQSDQVERSACPTCGSCSGMFTANSMNCLTEALGLSQPGNGSLLATHADRKQLFLNAGKRIVELTKRYYEQDDESALPRNIASKAAFENAMTLDIAMGGSTNTVLHLLAAAQEAEIDFTMSDIDKLSRKVPQLCKVAPSTQKYHMEDVHRAGGVIGILGELDRAGLLNRDVKNVLGLTLPQTLEQYDIIVTQDDAVKNMFRAGPAGIRTTQAFSQDCRWDTLDDDRSNGCIRSLEHAYSKDGGLAVLYGNFAENGCIVKTAGVDDSILKFTGPAKVYESQDDAVEAILGGKVVAGDVVVIRYEGPKGGPGMQEMLYPTSFLKSMGLGKACALITDGRFSGGTSGLSIGHVSPEAASGGSIGLIEDGDLIAIDIPNRGIQLQVSDAELAARREAQEARGNKAWTPKNRERQVSFALRAYASLATSADKGAVRDKSKLGG.

Residue D81 coordinates Mg(2+). Residue C122 coordinates [2Fe-2S] cluster. Residues D123 and K124 each contribute to the Mg(2+) site. K124 carries the post-translational modification N6-carboxylysine. C195 provides a ligand contact to [2Fe-2S] cluster. E491 contributes to the Mg(2+) binding site. S517 acts as the Proton acceptor in catalysis.

Belongs to the IlvD/Edd family. As to quaternary structure, homodimer. The cofactor is [2Fe-2S] cluster. It depends on Mg(2+) as a cofactor.

It catalyses the reaction (2R)-2,3-dihydroxy-3-methylbutanoate = 3-methyl-2-oxobutanoate + H2O. The enzyme catalyses (2R,3R)-2,3-dihydroxy-3-methylpentanoate = (S)-3-methyl-2-oxopentanoate + H2O. Its pathway is amino-acid biosynthesis; L-isoleucine biosynthesis; L-isoleucine from 2-oxobutanoate: step 3/4. It functions in the pathway amino-acid biosynthesis; L-valine biosynthesis; L-valine from pyruvate: step 3/4. Functions in the biosynthesis of branched-chain amino acids. Catalyzes the dehydration of (2R,3R)-2,3-dihydroxy-3-methylpentanoate (2,3-dihydroxy-3-methylvalerate) into 2-oxo-3-methylpentanoate (2-oxo-3-methylvalerate) and of (2R)-2,3-dihydroxy-3-methylbutanoate (2,3-dihydroxyisovalerate) into 2-oxo-3-methylbutanoate (2-oxoisovalerate), the penultimate precursor to L-isoleucine and L-valine, respectively. In Escherichia coli O81 (strain ED1a), this protein is Dihydroxy-acid dehydratase.